Consider the following 150-residue polypeptide: Large ribosomal subunit protein bL9 (150 aa).

Belongs to the bacterial ribosomal protein bL9 family.

Binds to the 23S rRNA. This is Large ribosomal subunit protein bL9 from Acidovorax ebreus (strain TPSY) (Diaphorobacter sp. (strain TPSY)).